The primary structure comprises 499 residues: Probable cytosol aminopeptidase (499 aa).

Positions 267 and 272 each coordinate Mn(2+). Residue K279 is part of the active site. Mn(2+)-binding residues include D290, D349, and E351. R353 is a catalytic residue.

The protein belongs to the peptidase M17 family. Requires Mn(2+) as cofactor.

It localises to the cytoplasm. It catalyses the reaction Release of an N-terminal amino acid, Xaa-|-Yaa-, in which Xaa is preferably Leu, but may be other amino acids including Pro although not Arg or Lys, and Yaa may be Pro. Amino acid amides and methyl esters are also readily hydrolyzed, but rates on arylamides are exceedingly low.. The enzyme catalyses Release of an N-terminal amino acid, preferentially leucine, but not glutamic or aspartic acids.. Its function is as follows. Presumably involved in the processing and regular turnover of intracellular proteins. Catalyzes the removal of unsubstituted N-terminal amino acids from various peptides. In Buchnera aphidicola subsp. Acyrthosiphon pisum (strain 5A), this protein is Probable cytosol aminopeptidase.